A 111-amino-acid polypeptide reads, in one-letter code: MSAQGQALQNHNNELVKCIEDLREKREEIIKQLREDDAEKAKITQELQILTKRLAQVNESIARKTETKNEYDKVISETEAAYLKILESSQTLLTVLKREAVNIAKKKQASS.

A coiled-coil region spans residues 6–71 (QALQNHNNEL…ARKTETKNEY (66 aa)).

It belongs to the SSNA1 family. Self-assembles into fibrils in a head-to-tail fashion.

The protein localises to the cytoplasm. The protein resides in the cytoskeleton. Its subcellular location is the flagellum basal body. It localises to the flagellum axoneme. Its function is as follows. Microtubule-binding protein which stabilizes dynamic microtubules by slowing growth and shrinkage at both plus and minus ends and serves as a sensor of microtubule damage. Induces microtubule branching which is mediated by the formation of long SSNA1 fibrils which guide microtubule protofilaments to split apart from the mother microtubule and form daughter microtubules. Required for cell division. This chain is Microtubule nucleation factor SSNA1, found in Chlamydomonas reinhardtii (Chlamydomonas smithii).